A 1025-amino-acid chain; its full sequence is MASSDLLSHLSATDRALFWKYGVGAEVSVPFQCVHHAFEFHAKSNPQLTAVDELGTTLSYGELDRRANCLASRLRSVGVVQGSRVCMLVERAVTLPVAVLGILKAGAAYIPLDGNIVSDSTLKHALVDSGSTVALTLRKFEHRLEGAPVPVVFLDDAICPSYNPSHCVKPRDTTTSKDSVYIIYTSGTTGTPKGVHVTHGNVTNLICIEPGQLGMKPGVRVSQMLNISFDFAAWEILGSLANGATLCPRGKTSKDWKAVMRSVDILFSTPSMLAPHNPVDYPNVKTVVVAGEACPKALADTWGARVKFWNACGPTEVTIANTMQLHIPGDIVTIGGPTPNNTAYVLDENMRPVPIGQTGVMWGGGAGITKGYLNLPDKTSERYVRDPFANDGSMMFNTGDLGKWVSNGTLQHLGRIDNQVKIKGFRVELDGVATAMETCAGVTGATALLIDGELWGFVKPSNISPEDIKAAAHKVQPYYAVPSKILTMDHFPETANGKTDKRVLQQMAIESKEEEAKLKEEKAAIPENVAWISLPPTVVTAPKTELTIPHRPSDHSLGSTNTKISAQVKEADSSASSTSELEKQEYIWSGYQDDDHPEKTQGRLVRNLRHQIFSLYRRLFSVVFIVNAAILIWICVKKEYDANRIGGIVIANVFIGVLMRQELVINTFFLIFTSIPSSWPLFIRRTAARVYHIGGIHSGAGVSSLLWLCLFTAQATKEMINGGKTSVRTVAITYVILAELLGIVIFAYPALRKRLHDTFENTHRFLGWSALALVWVQFMFLTIDYLPEGQMLGQTLVKTPQFWLVIILTCSVIWPWFRLRKVDVKPEVLSNHAVRLWFDYVTPPAGTFMRVSDAPLKEWHGFAAIPIPGRTGYSLVVSRAGDWTSKHIANPPTKLWVKGVPTYGVLKLVPMFRRMVIVATGSGIGPCAPAIFEKRIPMRVLWTAPNVRETFGDKLVDSILEANPEAVIYDTRKHGKPDMVKLTLRLVKEFNAEAVAIISNQPLTEKVVYGMMSRGIPAFGAIWDS.

The adenylation (A) domain stretch occupies residues 38–422; it reads FEFHAKSNPQ…LGRIDNQVKI (385 aa). Residues 332 to 333 and 412 to 415 contribute to the AMP site; these read VT and HLGR. Residues 556–638 form a thiolation and peptide carrier (T) domain region; that stretch reads SLGSTNTKIS…AILIWICVKK (83 aa). Residues 682–900 form a thioester reductase (TR) domain region; the sequence is FIRRTAARVY…PPTKLWVKGV (219 aa). Residues 685-688, 769-771, and Tyr840 each bind NADP(+); these read RTAA and SAL.

Belongs to the adenylate-forming reductase family.

Functionally, adenylate-forming reductase, a natural product biosynthesis enzyme that resembles non-ribosomal peptide synthetases, yet serves to modify one substrate, rather than to condense two or more building blocks. The A-domain preferentially accepts L-serine, L-alanine and L-valine as substrates. The natural product of the enzyme is not yet known. This Coprinopsis cinerea (strain Okayama-7 / 130 / ATCC MYA-4618 / FGSC 9003) (Inky cap fungus) protein is Adenylate-forming reductase 03009.